The primary structure comprises 316 residues: Very-long-chain 3-oxooacyl-coA reductase let-767 (316 aa).

NADP(+) is bound by residues Ile-52 to Thr-80 and Asp-106. Ser-189 contacts substrate. The active-site Proton acceptor is Tyr-202. Lys-206 provides a ligand contact to NADP(+).

It belongs to the short-chain dehydrogenases/reductases (SDR) family. 17-beta-HSD 3 subfamily.

It carries out the reaction a very-long-chain (3R)-3-hydroxyacyl-CoA + NADP(+) = a very-long-chain 3-oxoacyl-CoA + NADPH + H(+). Its pathway is lipid metabolism; fatty acid biosynthesis. Required for branched chain fatty acid synthesis. Catalyzes the reduction of the 3-ketoacyl-CoA intermediate that is formed in each cycle of fatty acid elongation. Very long-chain fatty acids (VLCFAs) serve as precursors for ceramide and sphingolipids. May also be required for sterol hormone production. The protein is Very-long-chain 3-oxooacyl-coA reductase let-767 of Caenorhabditis briggsae.